We begin with the raw amino-acid sequence, 490 residues long: ATP synthase subunit beta, plastid (490 aa).

An ATP-binding site is contributed by 170-177; the sequence is GGAGVGKT.

Belongs to the ATPase alpha/beta chains family. F-type ATPases have 2 components, CF(1) - the catalytic core - and CF(0) - the membrane proton channel. CF(1) has five subunits: alpha(3), beta(3), gamma(1), delta(1), epsilon(1). CF(0) has four main subunits: a(1), b(1), b'(1) and c(9-12).

It localises to the plastid membrane. It carries out the reaction ATP + H2O + 4 H(+)(in) = ADP + phosphate + 5 H(+)(out). In terms of biological role, produces ATP from ADP in the presence of a proton gradient across the membrane. The catalytic sites are hosted primarily by the beta subunits. The chain is ATP synthase subunit beta, plastid from Cuscuta exaltata (Tall dodder).